The following is a 290-amino-acid chain: Zinc finger AN1 and C2H2 domain-containing stress-associated protein 16 (290 aa).

2 consecutive AN1-type zinc fingers follow at residues 7–55 and 95–145; these read PNLG…QKDV and VTKK…KPES. 16 residues coordinate Zn(2+): cysteine 13, cysteine 18, cysteine 28, cysteine 31, cysteine 36, histidine 39, histidine 45, cysteine 47, cysteine 101, cysteine 106, cysteine 118, cysteine 121, cysteine 126, histidine 129, histidine 135, and cysteine 137. 2 consecutive C2H2-type zinc fingers follow at residues 224–247 and 261–284; these read EQCVQCPARFSTVGALIEHCEKSH and DVCPKCSKAFRDPVLLVEHVERDH.

Functionally, may be involved in environmental stress response. This Oryza sativa subsp. japonica (Rice) protein is Zinc finger AN1 and C2H2 domain-containing stress-associated protein 16 (SAP16).